The following is a 204-amino-acid chain: dTTP/UTP pyrophosphatase (204 aa).

The Proton acceptor role is filled by aspartate 68.

It belongs to the Maf family. YhdE subfamily. It depends on a divalent metal cation as a cofactor.

Its subcellular location is the cytoplasm. The catalysed reaction is dTTP + H2O = dTMP + diphosphate + H(+). It catalyses the reaction UTP + H2O = UMP + diphosphate + H(+). In terms of biological role, nucleoside triphosphate pyrophosphatase that hydrolyzes dTTP and UTP. May have a dual role in cell division arrest and in preventing the incorporation of modified nucleotides into cellular nucleic acids. This chain is dTTP/UTP pyrophosphatase, found in Thermotoga maritima (strain ATCC 43589 / DSM 3109 / JCM 10099 / NBRC 100826 / MSB8).